The following is a 22-amino-acid chain: Hemoglobinase-like protein 2 (22 aa).

Belongs to the peptidase C13 family.

It catalyses the reaction Hydrolysis of proteins and small molecule substrates at -Asn-|-Xaa- bonds.. The sequence is that of Hemoglobinase-like protein 2 from Fasciola hepatica (Liver fluke).